The primary structure comprises 208 residues: Glutathione S-transferase GstB (208 aa).

In terms of domain architecture, GST N-terminal spans 1–83; sequence MITLWGRNNS…YLAAQYGQKR (83 aa). Residues Asn12, Asn39, Val53, and 67-68 each bind glutathione; that span reads ES. One can recognise a GST C-terminal domain in the interval 88-208; that stretch reads SPARRAEAEK…VRKVVMIPVS (121 aa).

The protein belongs to the GST superfamily.

It catalyses the reaction RX + glutathione = an S-substituted glutathione + a halide anion + H(+). Functionally, conjugation of reduced glutathione to a wide number of exogenous and endogenous hydrophobic electrophiles. This chain is Glutathione S-transferase GstB (gstB), found in Escherichia coli O6:H1 (strain CFT073 / ATCC 700928 / UPEC).